Here is a 173-residue protein sequence, read N- to C-terminus: NAD(P)H-quinone oxidoreductase subunit J (173 aa).

It belongs to the complex I 30 kDa subunit family. In terms of assembly, NDH-1 can be composed of about 15 different subunits; different subcomplexes with different compositions have been identified which probably have different functions.

The protein resides in the cellular thylakoid membrane. The catalysed reaction is a plastoquinone + NADH + (n+1) H(+)(in) = a plastoquinol + NAD(+) + n H(+)(out). It catalyses the reaction a plastoquinone + NADPH + (n+1) H(+)(in) = a plastoquinol + NADP(+) + n H(+)(out). Functionally, NDH-1 shuttles electrons from an unknown electron donor, via FMN and iron-sulfur (Fe-S) centers, to quinones in the respiratory and/or the photosynthetic chain. The immediate electron acceptor for the enzyme in this species is believed to be plastoquinone. Couples the redox reaction to proton translocation, and thus conserves the redox energy in a proton gradient. Cyanobacterial NDH-1 also plays a role in inorganic carbon-concentration. The sequence is that of NAD(P)H-quinone oxidoreductase subunit J from Prochlorococcus marinus (strain NATL2A).